Consider the following 220-residue polypeptide: Cysteine-rich venom protein VAR5 (220 aa).

Residues 1-22 (MILLKLYLTLAAILCQSRGTTS) form the signal peptide. The SCP domain maps to 41-169 (NKHNDLRRTV…PLKYFLVCQY (129 aa)). 5 disulfides stabilise this stretch: Cys77/Cys156, Cys95/Cys170, Cys151/Cys167, Cys189/Cys196, and Cys192/Cys201. The ShKT domain maps to 205 to 220 (CEHSNQYINCPDLTKQ).

This sequence belongs to the CRISP family. Contains 8 disulfide bonds. Expressed by the venom gland.

The protein resides in the secreted. Blocks ryanodine receptors, and potassium channels. The protein is Cysteine-rich venom protein VAR5 of Varanus acanthurus (Ridge-tailed monitor).